The chain runs to 95 residues: Small ribosomal subunit protein uS17 (95 aa).

This sequence belongs to the universal ribosomal protein uS17 family. In terms of assembly, part of the 30S ribosomal subunit.

Functionally, one of the primary rRNA binding proteins, it binds specifically to the 5'-end of 16S ribosomal RNA. This Mycoplasmopsis synoviae (strain 53) (Mycoplasma synoviae) protein is Small ribosomal subunit protein uS17.